Reading from the N-terminus, the 518-residue chain is Glutamate--cysteine ligase (518 aa).

The protein belongs to the glutamate--cysteine ligase type 1 family. Type 1 subfamily.

The enzyme catalyses L-cysteine + L-glutamate + ATP = gamma-L-glutamyl-L-cysteine + ADP + phosphate + H(+). It functions in the pathway sulfur metabolism; glutathione biosynthesis; glutathione from L-cysteine and L-glutamate: step 1/2. The chain is Glutamate--cysteine ligase from Escherichia coli O127:H6 (strain E2348/69 / EPEC).